A 407-amino-acid polypeptide reads, in one-letter code: 1-deoxy-D-xylulose 5-phosphate reductoisomerase (407 aa).

Residues Thr27, Gly28, Ser29, Ile30, Ala53, Arg54, Asn55, and Asn140 each contribute to the NADPH site. Residue Lys141 coordinates 1-deoxy-D-xylulose 5-phosphate. An NADPH-binding site is contributed by Glu142. Position 166 (Asp166) interacts with Mn(2+). 1-deoxy-D-xylulose 5-phosphate-binding residues include Ser167, Glu168, Ser192, and His215. Glu168 lines the Mn(2+) pocket. Gly221 is a binding site for NADPH. 1-deoxy-D-xylulose 5-phosphate-binding residues include Ser228, Asn233, Lys234, and Glu237. Glu237 lines the Mn(2+) pocket.

This sequence belongs to the DXR family. Mg(2+) is required as a cofactor. The cofactor is Mn(2+).

It carries out the reaction 2-C-methyl-D-erythritol 4-phosphate + NADP(+) = 1-deoxy-D-xylulose 5-phosphate + NADPH + H(+). The protein operates within isoprenoid biosynthesis; isopentenyl diphosphate biosynthesis via DXP pathway; isopentenyl diphosphate from 1-deoxy-D-xylulose 5-phosphate: step 1/6. Its function is as follows. Catalyzes the NADPH-dependent rearrangement and reduction of 1-deoxy-D-xylulose-5-phosphate (DXP) to 2-C-methyl-D-erythritol 4-phosphate (MEP). The polypeptide is 1-deoxy-D-xylulose 5-phosphate reductoisomerase (Oleidesulfovibrio alaskensis (strain ATCC BAA-1058 / DSM 17464 / G20) (Desulfovibrio alaskensis)).